We begin with the raw amino-acid sequence, 328 residues long: Ribosomal RNA small subunit methyltransferase H (328 aa).

S-adenosyl-L-methionine contacts are provided by residues 35 to 37, aspartate 60, phenylalanine 87, aspartate 113, and glutamine 120; that span reads GSH.

The protein belongs to the methyltransferase superfamily. RsmH family.

Its subcellular location is the cytoplasm. It catalyses the reaction cytidine(1402) in 16S rRNA + S-adenosyl-L-methionine = N(4)-methylcytidine(1402) in 16S rRNA + S-adenosyl-L-homocysteine + H(+). Specifically methylates the N4 position of cytidine in position 1402 (C1402) of 16S rRNA. The chain is Ribosomal RNA small subunit methyltransferase H from Chlorobium chlorochromatii (strain CaD3).